The chain runs to 77 residues: Conotoxin VnMEKL-023 (77 aa).

Positions 1 to 19 are cleaved as a signal peptide; the sequence is MQKLTILLLVAAVLMSTQA. Residues 20–37 constitute a propeptide that is removed on maturation; that stretch reads LIKGGGEKRPKEKIRFLS. 3 cysteine pairs are disulfide-bonded: Cys-51/Cys-65, Cys-58/Cys-69, and Cys-64/Cys-74.

It belongs to the conotoxin O2 superfamily. As to expression, expressed by the venom duct.

Its subcellular location is the secreted. In Conus ventricosus (Mediterranean cone), this protein is Conotoxin VnMEKL-023.